Reading from the N-terminus, the 259-residue chain is Aliphatic sulfonates import ATP-binding protein SsuB 1 (259 aa).

The region spanning 15-229 (VECRRITRRF…QASTPGFQAL (215 aa)) is the ABC transporter domain. 47–54 (GSSGSGKT) contacts ATP.

The protein belongs to the ABC transporter superfamily. Aliphatic sulfonates importer (TC 3.A.1.17.2) family. The complex is composed of two ATP-binding proteins (SsuB), two transmembrane proteins (SsuC) and a solute-binding protein (SsuA).

It localises to the cell inner membrane. The catalysed reaction is ATP + H2O + aliphatic sulfonate-[sulfonate-binding protein]Side 1 = ADP + phosphate + aliphatic sulfonateSide 2 + [sulfonate-binding protein]Side 1.. In terms of biological role, part of the ABC transporter complex SsuABC involved in aliphatic sulfonates import. Responsible for energy coupling to the transport system. This Pseudomonas fluorescens (strain ATCC BAA-477 / NRRL B-23932 / Pf-5) protein is Aliphatic sulfonates import ATP-binding protein SsuB 1.